The chain runs to 434 residues: Glutamyl-tRNA reductase (434 aa).

Residues 54 to 57 (TCNR), Ser-113, 118 to 120 (EAQ), and Gln-124 each bind substrate. The Nucleophile role is filled by Cys-55. 193–198 (GGGEVS) provides a ligand contact to NADP(+).

It belongs to the glutamyl-tRNA reductase family. In terms of assembly, homodimer.

The enzyme catalyses (S)-4-amino-5-oxopentanoate + tRNA(Glu) + NADP(+) = L-glutamyl-tRNA(Glu) + NADPH + H(+). It functions in the pathway porphyrin-containing compound metabolism; protoporphyrin-IX biosynthesis; 5-aminolevulinate from L-glutamyl-tRNA(Glu): step 1/2. The protein operates within porphyrin-containing compound metabolism; chlorophyll biosynthesis. Its function is as follows. Catalyzes the NADPH-dependent reduction of glutamyl-tRNA(Glu) to glutamate 1-semialdehyde (GSA). The polypeptide is Glutamyl-tRNA reductase (Chloroflexus aurantiacus (strain ATCC 29366 / DSM 635 / J-10-fl)).